We begin with the raw amino-acid sequence, 140 residues long: MLQPKRTKYRKQQKGRVTGVATRGHRIAFGSFAIKSLEGGWITARQIEAARIAMTRAMKREGQVWIRVFPDKPITQKPAEVRMGKGKGAPEYWVACIKPGTILFESGGVSIETAQESLRLAAQKLPFKTKFIVRPDYVAS.

It belongs to the universal ribosomal protein uL16 family. In terms of assembly, part of the 50S ribosomal subunit.

Functionally, binds 23S rRNA and is also seen to make contacts with the A and possibly P site tRNAs. The sequence is that of Large ribosomal subunit protein uL16 from Cytophaga hutchinsonii (strain ATCC 33406 / DSM 1761 / CIP 103989 / NBRC 15051 / NCIMB 9469 / D465).